A 302-amino-acid chain; its full sequence is DNA-directed RNA polymerase II subunit rpb3 (302 aa).

This sequence belongs to the archaeal Rpo3/eukaryotic RPB3 RNA polymerase subunit family. As to quaternary structure, component of the RNA polymerase II (Pol II) complex consisting of 12 subunits.

Its subcellular location is the nucleus. In terms of biological role, DNA-dependent RNA polymerase catalyzes the transcription of DNA into RNA using the four ribonucleoside triphosphates as substrates. Component of RNA polymerase II which synthesizes mRNA precursors and many functional non-coding RNAs. Pol II is the central component of the basal RNA polymerase II transcription machinery. It is composed of mobile elements that move relative to each other. Rpb3 is part of the core element with the central large cleft and the clamp element that moves to open and close the cleft. In Dictyostelium discoideum (Social amoeba), this protein is DNA-directed RNA polymerase II subunit rpb3 (polr2c).